We begin with the raw amino-acid sequence, 467 residues long: RuvB-like helicase 2 (467 aa).

Position 73-80 (73-80 (GPPSTGKT)) interacts with ATP.

This sequence belongs to the RuvB family. In terms of assembly, may form heterododecamers with RVB1. Component of the SWR1 chromatin remodeling complex, the INO80 chromatin remodeling complex, and of the R2TP complex.

It localises to the nucleus. It catalyses the reaction ATP + H2O = ADP + phosphate + H(+). In terms of biological role, DNA helicase which participates in several chromatin remodeling complexes, including the SWR1 and the INO80 complexes. The SWR1 complex mediates the ATP-dependent exchange of histone H2A for the H2A variant HZT1 leading to transcriptional regulation of selected genes by chromatin remodeling. The INO80 complex remodels chromatin by shifting nucleosomes and is involved in DNA repair. Also involved in pre-rRNA processing. The chain is RuvB-like helicase 2 (RVB2) from Kluyveromyces lactis (strain ATCC 8585 / CBS 2359 / DSM 70799 / NBRC 1267 / NRRL Y-1140 / WM37) (Yeast).